A 400-amino-acid polypeptide reads, in one-letter code: Selection and upkeep of intraepithelial T-cells protein 2 (400 aa).

The signal sequence occupies residues 1-21 (MGATGVLLCVVLHFLQMVTQS). Residues 22–240 (SEKFTVTGLQ…LSGELFSWKR (219 aa)) lie on the Extracellular side of the membrane. An Ig-like V-type domain is found at 23 to 133 (EKFTVTGLQR…VGEFYEEHIT (111 aa)). Disulfide bonds link cysteine 46-cysteine 120 and cysteine 160-cysteine 214. The Ig-like C1-type domain occupies 139–225 (ATSSVMYILM…LQNLLTHQEE (87 aa)). The N-linked (GlcNAc...) asparagine glycan is linked to asparagine 197. Residues 241–261 (VWIMILTTIGFMMIAFCMTYC) traverse the membrane as a helical segment. At 262–280 (VQQHLLYGTFSKGKCHWLK) the chain is on the cytoplasmic side. The helical transmembrane segment at 281–301 (STMIFMFSVIAVTGVMLILHL) threads the bilayer. The Extracellular portion of the chain corresponds to 302–321 (KQRVPVSDQHFELDTLWLED). Residues 322-342 (ISVILCVLIVFIIKLISFIYF) traverse the membrane as a helical segment. At 343–400 (RLEGDHQGWSLPPYLSATPTAAICRLAVPEYSRGHLQLDSEDDLAGMGPSPFFITPCF) the chain is on the cytoplasmic side.

It belongs to the SKINT family. As to expression, expressed in skin, thymus and mammary gland.

The protein resides in the membrane. In terms of biological role, may act by engaging a cell surface molecule on immature T-cells in the embryonic thymus. This chain is Selection and upkeep of intraepithelial T-cells protein 2 (Skint2), found in Mus musculus (Mouse).